The sequence spans 2379 residues: Serine/threonine-protein kinase MEC1 (2379 aa).

One can recognise an FAT domain in the interval 1410–1955 (LLANKSLETN…LWHISVLCQS (546 aa)). In terms of domain architecture, PI3K/PI4K catalytic spans 2060 to 2363 (FASSYKIFSS…QAETLIQEAT (304 aa)). A G-loop region spans residues 2066 to 2072 (IFSSLKK). A catalytic loop region spans residues 2232 to 2240 (GLGDRHCEN). The interval 2252-2276 (HVDFDCLFEKGENLPVPEIVPFRLT) is activation loop. The FATC domain maps to 2347–2379 (LLLSVSGQAETLIQEATSTENLSKMYIGWLPFW).

Belongs to the PI3/PI4-kinase family. ATM subfamily.

The protein localises to the nucleus. It carries out the reaction L-seryl-[protein] + ATP = O-phospho-L-seryl-[protein] + ADP + H(+). The catalysed reaction is L-threonyl-[protein] + ATP = O-phospho-L-threonyl-[protein] + ADP + H(+). Functionally, serine/threonine protein kinase which activates checkpoint signaling upon genotoxic stresses such as ionizing radiation (IR), ultraviolet light (UV), or DNA replication stalling, thereby acting as a DNA damage sensor. Recognizes the substrate consensus sequence [ST]-Q. Recruited to DNA lesions in order to initiate the DNA repair by homologous recombination. Phosphorylates histone H2A to form H2AS128ph (gamma-H2A) at sites of DNA damage, also involved in the regulation of DNA damage response mechanism. Required for cell growth and meiotic recombination. This chain is Serine/threonine-protein kinase MEC1 (MEC1), found in Candida glabrata (strain ATCC 2001 / BCRC 20586 / JCM 3761 / NBRC 0622 / NRRL Y-65 / CBS 138) (Yeast).